The sequence spans 146 residues: D-aminoacyl-tRNA deacylase (146 aa).

A Gly-cisPro motif, important for rejection of L-amino acids motif is present at residues 137-138; sequence GP.

The protein belongs to the DTD family. Homodimer.

It is found in the cytoplasm. It catalyses the reaction glycyl-tRNA(Ala) + H2O = tRNA(Ala) + glycine + H(+). The enzyme catalyses a D-aminoacyl-tRNA + H2O = a tRNA + a D-alpha-amino acid + H(+). An aminoacyl-tRNA editing enzyme that deacylates mischarged D-aminoacyl-tRNAs. Also deacylates mischarged glycyl-tRNA(Ala), protecting cells against glycine mischarging by AlaRS. Acts via tRNA-based rather than protein-based catalysis; rejects L-amino acids rather than detecting D-amino acids in the active site. By recycling D-aminoacyl-tRNA to D-amino acids and free tRNA molecules, this enzyme counteracts the toxicity associated with the formation of D-aminoacyl-tRNA entities in vivo and helps enforce protein L-homochirality. In Hahella chejuensis (strain KCTC 2396), this protein is D-aminoacyl-tRNA deacylase.